The chain runs to 176 residues: Nuclear transcription factor Y subunit B-10 (176 aa).

The segment covering 1 to 15 (MAESQTGGGGGGSHE) has biased composition (gly residues). A disordered region spans residues 1 to 29 (MAESQTGGGGGGSHESGGDQSPRSLNVRE). Position 2 is an N-acetylalanine (Ala2). A DNA-binding region spans residues 34-40 (LPIANIS). The tract at residues 61–72 (MQECVSEFISFV) is subunit association domain (SAD). A disordered region spans residues 121-176 (GDTKGSGKGGESSAKRDGQPSQVSQFSQVPQQGSFSQGPYGNSQGSNMMVQMPGTE). Residues 139 to 159 (QPSQVSQFSQVPQQGSFSQGP) are compositionally biased toward low complexity. Over residues 160–169 (YGNSQGSNMM) the composition is skewed to polar residues.

The protein belongs to the NFYB/HAP3 subunit family. As to quaternary structure, heterotrimeric transcription factor composed of three components, NF-YA, NF-YB and NF-YC. NF-YB and NF-YC must interact and dimerize for NF-YA association and DNA binding. In terms of tissue distribution, expressed in the whole plant, except roots.

It localises to the nucleus. Component of the NF-Y/HAP transcription factor complex. The NF-Y complex stimulates the transcription of various genes by recognizing and binding to a CCAAT motif in promoters. The protein is Nuclear transcription factor Y subunit B-10 (NFYB10) of Arabidopsis thaliana (Mouse-ear cress).